The primary structure comprises 484 residues: Phosphoenolpyruvate carboxylase (484 aa).

The protein belongs to the PEPCase type 2 family. In terms of assembly, homotetramer. Requires Mg(2+) as cofactor.

It catalyses the reaction oxaloacetate + phosphate = phosphoenolpyruvate + hydrogencarbonate. In terms of biological role, catalyzes the irreversible beta-carboxylation of phosphoenolpyruvate (PEP) to form oxaloacetate (OAA), a four-carbon dicarboxylic acid source for the tricarboxylic acid cycle. The sequence is that of Phosphoenolpyruvate carboxylase from Methanospirillum hungatei JF-1 (strain ATCC 27890 / DSM 864 / NBRC 100397 / JF-1).